The chain runs to 296 residues: Acetyl-coenzyme A carboxylase carboxyl transferase subunit beta (296 aa).

A CoA carboxyltransferase N-terminal domain is found at 25–294; the sequence is VWTKCTSCEQ…PFVEPELISE (270 aa). Residues Cys-29, Cys-32, Cys-48, and Cys-51 each coordinate Zn(2+). The C4-type zinc finger occupies 29-51; the sequence is CTSCEQVLYSEELKRNLYVCPKC.

The protein belongs to the AccD/PCCB family. In terms of assembly, acetyl-CoA carboxylase is a heterohexamer composed of biotin carboxyl carrier protein (AccB), biotin carboxylase (AccC) and two subunits each of ACCase subunit alpha (AccA) and ACCase subunit beta (AccD). It depends on Zn(2+) as a cofactor.

It is found in the cytoplasm. The enzyme catalyses N(6)-carboxybiotinyl-L-lysyl-[protein] + acetyl-CoA = N(6)-biotinyl-L-lysyl-[protein] + malonyl-CoA. It participates in lipid metabolism; malonyl-CoA biosynthesis; malonyl-CoA from acetyl-CoA: step 1/1. Component of the acetyl coenzyme A carboxylase (ACC) complex. Biotin carboxylase (BC) catalyzes the carboxylation of biotin on its carrier protein (BCCP) and then the CO(2) group is transferred by the transcarboxylase to acetyl-CoA to form malonyl-CoA. In Haemophilus influenzae (strain PittEE), this protein is Acetyl-coenzyme A carboxylase carboxyl transferase subunit beta.